The primary structure comprises 461 residues: Mitochondrial distribution and morphology protein 12 (461 aa).

The 454-residue stretch at 1–454 folds into the SMP-LTD domain; the sequence is MSLDLDWNLL…YPNYYTIDLP (454 aa). Disordered regions lie at residues 75-104 and 226-301; these read RRRGARQTTPASNATTLVESPTDSFGVHHG and DASS…PSSA. Composition is skewed to polar residues over residues 80–97 and 272–288; these read RQTTPASNATTLVESPTD and RATSAPSFRSISGQNSP.

The protein belongs to the MDM12 family. In terms of assembly, component of the ER-mitochondria encounter structure (ERMES) or MDM complex, composed of MMM1, MDM10, MDM12 and MDM34. An MMM1 homodimer associates with one molecule of MDM12 on each side in a pairwise head-to-tail manner, and the SMP-LTD domains of MMM1 and MDM12 generate a continuous hydrophobic tunnel for phospholipid trafficking.

The protein resides in the mitochondrion outer membrane. The protein localises to the endoplasmic reticulum membrane. Component of the ERMES/MDM complex, which serves as a molecular tether to connect the endoplasmic reticulum (ER) and mitochondria. Components of this complex are involved in the control of mitochondrial shape and protein biogenesis, and function in nonvesicular lipid trafficking between the ER and mitochondria. MDM12 is required for the interaction of the ER-resident membrane protein MMM1 and the outer mitochondrial membrane-resident beta-barrel protein MDM10. The MDM12-MMM1 subcomplex functions in the major beta-barrel assembly pathway that is responsible for biogenesis of all mitochondrial outer membrane beta-barrel proteins, and acts in a late step after the SAM complex. The MDM10-MDM12-MMM1 subcomplex further acts in the TOM40-specific pathway after the action of the MDM12-MMM1 complex. Essential for establishing and maintaining the structure of mitochondria and maintenance of mtDNA nucleoids. The polypeptide is Mitochondrial distribution and morphology protein 12 (Mycosarcoma maydis (Corn smut fungus)).